Here is a 446-residue protein sequence, read N- to C-terminus: Protein IQ-DOMAIN 19 (446 aa).

Positions 93–140 (IPGTPKEKRRWSFRRSSATGPPPPACAITLKDSPPPPPPPPPPPPLQQ) are disordered. Residues 125 to 139 (SPPPPPPPPPPPPLQ) show a composition bias toward pro residues. IQ domains are found at residues 163 to 191 (EEFA…GLVK) and 192 to 214 (LQAL…CMQA). The interval 214 to 231 (ALITLQAKAREQRIRMIG) is calmodulin-binding. A compositionally biased stretch (low complexity) spans 332 to 345 (QSSKAKARSQSAPK). Residues 332-398 (QSSKAKARSQ…TAKESQQHHH (67 aa)) are disordered. The span at 379 to 392 (QRSSSQLGSNTAKE) shows a compositional bias: polar residues.

Belongs to the IQD family. As to quaternary structure, binds to multiple calmodulin (CaM) in the presence of Ca(2+) and CaM-like proteins.

Its subcellular location is the cytoplasm. It localises to the cytoskeleton. The protein resides in the cell membrane. Functionally, may be involved in cooperative interactions with calmodulins or calmodulin-like proteins. Recruits calmodulin proteins to microtubules, thus being a potential scaffold in cellular signaling and trafficking. Acts as a positive regulator of trichome branch initiation. May associate with nucleic acids and regulate gene expression at the transcriptional or post-transcriptional level. The sequence is that of Protein IQ-DOMAIN 19 from Arabidopsis thaliana (Mouse-ear cress).